The sequence spans 328 residues: Pancreas transcription factor 1 subunit alpha (328 aa).

Residues 163–215 (QLRQAANVRERRRMQSINDAFEGLRSHIPTLPYEKRLSKVDTLRLAIGYINFL) form the bHLH domain. 2 disordered regions span residues 259 to 278 (RGTRSPSPSDPDYGLPPLAG) and 305 to 328 (DPRKLNSKSSFNNIENEPPFEFVS).

Component of the pancreas transcription factor 1 complex (PTF1) which is composed of TCF3/p75, TCF12/p64 and PTF1A/p48. TCF3 is responsible for the nuclear import of the p48/p64 complex. Interacts with TCF3 and RBPSUH/RBP-Jkappa. Pancreas-specific (at protein level). Loss of expression is seen in ductal type pancreas cancers.

Its subcellular location is the nucleus. It is found in the cytoplasm. Transcription factor implicated in the cell fate determination in various organs. Binds to the E-box consensus sequence 5'-CANNTG-3'. Plays a role in early and late pancreas development and differentiation. Important for determining whether cells allocated to the pancreatic buds continue towards pancreatic organogenesis or revert back to duodenal fates. May be involved in the maintenance of exocrine pancreas-specific gene expression including ELA1 and amylase. Required for the formation of pancreatic acinar and ductal cells. Plays an important role in cerebellar development. Directly regulated by FOXN4 and RORC during retinal development, FOXN4-PTF1A pathway plays a central role in directing the differentiation of retinal progenitors towards horizontal and amacrine fates. This chain is Pancreas transcription factor 1 subunit alpha (PTF1A), found in Homo sapiens (Human).